A 334-amino-acid polypeptide reads, in one-letter code: tRNA-dihydrouridine(20/20a) synthase (334 aa).

FMN-binding positions include 18–20 (PMM) and Q71. Residue C101 is the Proton donor of the active site. Residues K140, H172, 212–214 (NGG), and 234–235 (GR) contribute to the FMN site.

The protein belongs to the Dus family. DusA subfamily. Requires FMN as cofactor.

The catalysed reaction is 5,6-dihydrouridine(20) in tRNA + NADP(+) = uridine(20) in tRNA + NADPH + H(+). It catalyses the reaction 5,6-dihydrouridine(20) in tRNA + NAD(+) = uridine(20) in tRNA + NADH + H(+). It carries out the reaction 5,6-dihydrouridine(20a) in tRNA + NADP(+) = uridine(20a) in tRNA + NADPH + H(+). The enzyme catalyses 5,6-dihydrouridine(20a) in tRNA + NAD(+) = uridine(20a) in tRNA + NADH + H(+). Its function is as follows. Catalyzes the synthesis of 5,6-dihydrouridine (D), a modified base found in the D-loop of most tRNAs, via the reduction of the C5-C6 double bond in target uridines. Specifically modifies U20 and U20a in tRNAs. The polypeptide is tRNA-dihydrouridine(20/20a) synthase (Xanthomonas axonopodis pv. citri (strain 306)).